The primary structure comprises 94 residues: Co-chaperonin GroES (94 aa).

This sequence belongs to the GroES chaperonin family. Heptamer of 7 subunits arranged in a ring. Interacts with the chaperonin GroEL.

Its subcellular location is the cytoplasm. Its function is as follows. Together with the chaperonin GroEL, plays an essential role in assisting protein folding. The GroEL-GroES system forms a nano-cage that allows encapsulation of the non-native substrate proteins and provides a physical environment optimized to promote and accelerate protein folding. GroES binds to the apical surface of the GroEL ring, thereby capping the opening of the GroEL channel. This is Co-chaperonin GroES from Clostridium beijerinckii (strain ATCC 51743 / NCIMB 8052) (Clostridium acetobutylicum).